A 492-amino-acid chain; its full sequence is Cysteine--tRNA ligase (492 aa).

Cys-31 provides a ligand contact to Zn(2+). The 'HIGH' region signature appears at 33 to 43 (PTVYGDPHLGH). Residues Cys-226, His-251, and Glu-255 each coordinate Zn(2+). Positions 283 to 287 (KMGKS) match the 'KMSKS' region motif. Position 286 (Lys-286) interacts with ATP.

This sequence belongs to the class-I aminoacyl-tRNA synthetase family. In terms of assembly, monomer. It depends on Zn(2+) as a cofactor.

Its subcellular location is the cytoplasm. The enzyme catalyses tRNA(Cys) + L-cysteine + ATP = L-cysteinyl-tRNA(Cys) + AMP + diphosphate. The sequence is that of Cysteine--tRNA ligase from Azobacteroides pseudotrichonymphae genomovar. CFP2.